A 571-amino-acid chain; its full sequence is Proline--tRNA ligase (571 aa).

It belongs to the class-II aminoacyl-tRNA synthetase family. ProS type 1 subfamily. As to quaternary structure, homodimer.

The protein resides in the cytoplasm. The enzyme catalyses tRNA(Pro) + L-proline + ATP = L-prolyl-tRNA(Pro) + AMP + diphosphate. In terms of biological role, catalyzes the attachment of proline to tRNA(Pro) in a two-step reaction: proline is first activated by ATP to form Pro-AMP and then transferred to the acceptor end of tRNA(Pro). As ProRS can inadvertently accommodate and process non-cognate amino acids such as alanine and cysteine, to avoid such errors it has two additional distinct editing activities against alanine. One activity is designated as 'pretransfer' editing and involves the tRNA(Pro)-independent hydrolysis of activated Ala-AMP. The other activity is designated 'posttransfer' editing and involves deacylation of mischarged Ala-tRNA(Pro). The misacylated Cys-tRNA(Pro) is not edited by ProRS. In Stutzerimonas stutzeri (strain A1501) (Pseudomonas stutzeri), this protein is Proline--tRNA ligase.